The sequence spans 938 residues: Isoleucine--tRNA ligase (938 aa).

Residues 58–68 (PYANGNIHIGH) carry the 'HIGH' region motif. An L-isoleucyl-5'-AMP-binding site is contributed by E561. The 'KMSKS' region motif lies at 602-606 (KMSKS). ATP is bound at residue K605. The Zn(2+) site is built by C901, C904, C921, and C924.

The protein belongs to the class-I aminoacyl-tRNA synthetase family. IleS type 1 subfamily. As to quaternary structure, monomer. Zn(2+) serves as cofactor.

It is found in the cytoplasm. It carries out the reaction tRNA(Ile) + L-isoleucine + ATP = L-isoleucyl-tRNA(Ile) + AMP + diphosphate. Its function is as follows. Catalyzes the attachment of isoleucine to tRNA(Ile). As IleRS can inadvertently accommodate and process structurally similar amino acids such as valine, to avoid such errors it has two additional distinct tRNA(Ile)-dependent editing activities. One activity is designated as 'pretransfer' editing and involves the hydrolysis of activated Val-AMP. The other activity is designated 'posttransfer' editing and involves deacylation of mischarged Val-tRNA(Ile). This is Isoleucine--tRNA ligase from Yersinia pestis bv. Antiqua (strain Angola).